Consider the following 415-residue polypeptide: D-galactonate dehydratase family member RspA (415 aa).

Asn48 and His133 together coordinate substrate. Tyr170 acts as the Proton donor/acceptor in catalysis. A Mg(2+)-binding site is contributed by Asp223. His225 (proton donor/acceptor) is an active-site residue. Positions 249 and 275 each coordinate Mg(2+). Substrate contacts are provided by Glu275, Arg296, His325, Asp329, and Glu352.

This sequence belongs to the mandelate racemase/muconate lactonizing enzyme family. GalD subfamily. It depends on Mg(2+) as a cofactor.

It carries out the reaction D-mannonate = 2-dehydro-3-deoxy-D-gluconate + H2O. Has low D-mannonate dehydratase activity (in vitro), suggesting that this is not a physiological substrate and that it has no significant role in D-mannonate degradation in vivo. Has no detectable activity with a panel of 70 other acid sugars (in vitro). The polypeptide is D-galactonate dehydratase family member RspA (rspA) (Escherichia coli (strain MS 21-1)).